The primary structure comprises 205 residues: High frequency lysogenization protein HflD homolog (205 aa).

Belongs to the HflD family.

It localises to the cytoplasm. The protein resides in the cell inner membrane. This chain is High frequency lysogenization protein HflD homolog, found in Alkalilimnicola ehrlichii (strain ATCC BAA-1101 / DSM 17681 / MLHE-1).